We begin with the raw amino-acid sequence, 459 residues long: Zinc finger and BTB domain-containing protein 9 (459 aa).

A BTB domain is found at 48–112 (CDVSLLVQGR…IYSGSLHLPL (65 aa)). Residues 178-189 (VRSSASTENSVL) are compositionally biased toward polar residues. 2 disordered regions span residues 178-200 (VRSS…EGSE) and 212-274 (EEEE…ASQI). Glycyl lysine isopeptide (Lys-Gly) (interchain with G-Cter in SUMO2) cross-links involve residues Lys285, Lys293, and Lys368. The disordered stretch occupies residues 293-356 (KEKTKVLSGE…GGTGQAMHGP (64 aa)). The C2H2-type 1 zinc-finger motif lies at 397 to 419 (FGCGICNKRFKLKHHLTEHMKTH). The C2H2-type 2; atypical zinc finger occupies 424–446 (HACPHCGRRFRVQAFFLRHRDLC).

It is found in the nucleus. May be involved in transcriptional regulation. The protein is Zinc finger and BTB domain-containing protein 9 (Zbtb9) of Mus musculus (Mouse).